The sequence spans 163 residues: Small ribosomal subunit protein uS9 (163 aa).

A compositionally biased stretch (polar residues) spans 1–11 (MAENTNDSQVV). Residues 1–40 (MAENTNDSQVVETEEELTNYTTETNAGAGTGTSAIEPGYG) form a disordered region. Over residues 18–27 (TNYTTETNAG) the composition is skewed to low complexity.

It belongs to the universal ribosomal protein uS9 family.

The polypeptide is Small ribosomal subunit protein uS9 (Bifidobacterium longum (strain DJO10A)).